Reading from the N-terminus, the 156-residue chain is Maintenance of carboxysome distribution protein B (156 aa).

Residues 1-55 (MSNNALDRLINKQKPKVPPRNDVVSESVSNDIKTQGQQELNTSLPPSDTKATPEE) form a required for interaction with McdA:DNA complex region. The interval 1–79 (MSNNALDRLI…QKPKLSPDTF (79 aa)) is disordered. A compositionally biased stretch (polar residues) spans 24–50 (VSESVSNDIKTQGQQELNTSLPPSDTK). The segment covering 51–63 (ATPEEMPTSHESE) has biased composition (basic and acidic residues). The stretch at 122 to 156 (PEELAQVIQLAQERLSQRKAIADYKRAKTMQERFL) forms a coiled coil.

In terms of assembly, homodimerizes; may exist in higher order oligomers in solution. Forms a complex with McdA:DNA. Homohexamerizes, interacts with shell components of the carboxysome.

The protein resides in the carboxysome. Functionally, mcdA and McdB together mediate carboxysome (Cb) spacing, size, ultrastructure and probably inheritance in the cell, together they prevent Cb aggregation. McdA is an ATPase that forms dynamic gradients on the nucleoid in response to adapter protein McdB, which associates with carboxysomes. The interplay between McdA gradients on the nucleoid and McdB-bound carboxysomes result in the equal spacing of Cbs along the cell length. Stimulates the ATPase activity of McdA, causing McdA to be released from DNA. Undergoes liquid-liquid phase separation. In terms of biological role, incorrect positioning (aggregation) of carboxysomes results in reduced CO(2) fixation by encapsulated ribulose-1,5-bisphosphate carboxylase (RuBisCO, cbbL/cbbS), which leads to slower growth. This is Maintenance of carboxysome distribution protein B from Gloeothece citriformis (strain PCC 7424) (Cyanothece sp. (strain PCC 7424)).